The following is a 1821-amino-acid chain: PH-interacting protein (1821 aa).

The residue at position 136 (S136) is a Phosphoserine. WD repeat units follow at residues 181–222 (GHLS…ATLR), 224–262 (HAAE…PLAV), 265–310 (GHSA…INPR), 319–360 (RPGV…KISE), and 363–402 (FHTD…WKSI). K421 is covalently cross-linked (Glycyl lysine isopeptide (Lys-Gly) (interchain with G-Cter in SUMO2)). WD repeat units lie at residues 422 to 461 (ITKM…LIHV), 464 to 504 (GHED…KVRS), and 512 to 551 (QGHG…KYDK). S641, S659, S674, S677, S683, and S692 each carry phosphoserine. 2 disordered regions span residues 653–695 (EQDL…SGQI) and 782–927 (DLGD…RLAV). Residues 665–681 (SNASRVNRGSVSSTSEV) show a composition bias toward polar residues. The span at 800–810 (SALEETPRPLE) shows a compositional bias: basic and acidic residues. Low complexity predominate over residues 841-854 (SDGSSSDYSSDYSD). A phosphoserine mark is found at S879, S880, S881, and S911. Basic residues predominate over residues 912 to 924 (PKKKKPKERKQKR). The segment at 924 to 1129 (RLAVGELTEN…MELIPNNAVF (206 aa)) is mediates interaction with IRS1. A Bromo 1 domain is found at 1156–1263 (WGANPRDEEC…DLLLHFIKDQ (108 aa)). Residues S1281, S1283, and S1296 each carry the phosphoserine modification. The interval 1282 to 1310 (DSEEEEKDADVPGTSTRKRKDHQPRRRLR) is disordered. Over residues 1297 to 1310 (TRKRKDHQPRRRLR) the composition is skewed to basic residues. Residue S1315 is modified to Phosphoserine. The region spanning 1316-1421 (YDIQAWKKQC…AFFEEHISSV (106 aa)) is the Bromo 2 domain. Residue T1359 is modified to Phosphothreonine. A Phosphoserine modification is found at S1405. The span at 1435 to 1446 (NTISKKRKKRNR) shows a compositional bias: basic residues. Residues 1435 to 1507 (NTISKKRKKR…PESSSVVRTR (73 aa)) are disordered. A compositionally biased stretch (low complexity) spans 1447-1457 (SSSLSSSAASS). K1470 participates in a covalent cross-link: Glycyl lysine isopeptide (Lys-Gly) (interchain with G-Cter in SUMO1); alternate. K1470 is covalently cross-linked (Glycyl lysine isopeptide (Lys-Gly) (interchain with G-Cter in SUMO2); alternate). A compositionally biased stretch (polar residues) spans 1471-1482 (SEVSTSPFSIPT). S1479 is modified (phosphoserine). K1497 is subject to N6-acetyllysine. Phosphoserine is present on S1525. An N6-acetyllysine modification is found at K1533. Positions 1556-1576 (STLSSPDPLTFSHATKNNSAK) are enriched in polar residues. 3 disordered regions span residues 1556-1596 (STLS…VFSK), 1623-1676 (QVNG…NSEQ), and 1740-1785 (RSNR…DSEE). At S1560 the chain carries Phosphoserine. A Glycyl lysine isopeptide (Lys-Gly) (interchain with G-Cter in SUMO2) cross-link involves residue K1644. At S1651 the chain carries Phosphoserine. A Glycyl lysine isopeptide (Lys-Gly) (interchain with G-Cter in SUMO2) cross-link involves residue K1670. A phosphoserine mark is found at S1762 and S1783.

In terms of assembly, interacts (via bromo domain) with acetylated lysine residues on histone H1.4, histone H3 and H4 (in vitro). Interacts with IRS1 and IRS2. In terms of tissue distribution, widely expressed with most abundant expression detected in pancreatic islets, brain and skeletal muscle. Predominantly expressed in developing and regenerating neurons. Expressed in adult brain (granular layer of the olfactorium bulb, hippocampus, dentate gyrus and cerebellum internal granular layer). Expressed in the CA3 region of adult hippocampus, adult and fetal retina, perinatal dorsal root ganglion and embryonal olfactory epithelia (at protein level).

The protein localises to the nucleus. In terms of biological role, probable regulator of the insulin and insulin-like growth factor signaling pathways. Stimulates cell proliferation through regulation of cyclin transcription and has an anti-apoptotic activity through AKT1 phosphorylation and activation. Plays a role in the regulation of cell morphology and cytoskeletal organization. This chain is PH-interacting protein (Phip), found in Mus musculus (Mouse).